The primary structure comprises 458 residues: Nuclear transcription factor Y subunit gamma (458 aa).

Positions 305 to 315 (QQQFSQFTDGQ) are enriched in low complexity. The tract at residues 305–379 (QQQFSQFTDG…QQSSTSPPPS (75 aa)) is disordered. Positions 339 to 351 (TGNSTPCTSSLPT) are enriched in polar residues.

This sequence belongs to the NFYC/HAP5 subunit family. Heterotrimeric transcription factor composed of three components, NF-YA, NF-YB and NF-YC. NF-YB and NF-YC must interact and dimerize for NF-YA association and DNA binding.

It localises to the nucleus. Its function is as follows. Component of the sequence-specific heterotrimeric transcription factor (NF-Y) which specifically recognizes a 5'-CCAAT-3' box motif found in the promoters of its target genes. NF-Y can function as both an activator and a repressor, depending on its interacting cofactors. This Homo sapiens (Human) protein is Nuclear transcription factor Y subunit gamma (NFYC).